Here is a 1238-residue protein sequence, read N- to C-terminus: uncharacterized protein (1238 aa).

Disordered regions lie at residues 22 to 83 (LQSA…QEHL), 96 to 150 (SSRQ…IASP), 169 to 250 (FEPD…HQML), 264 to 694 (QLNS…AAMV), 739 to 915 (TKAA…SVPE), 936 to 955 (THSA…APHE), and 1057 to 1089 (PKIS…QCSS). Residues 35–49 (QPPNQQPHQTQQQQQ) are compositionally biased toward low complexity. Over residues 58–72 (PSIQNLTTNATPTST) the composition is skewed to polar residues. Positions 73 to 83 (QLQQQQQQEHL) are enriched in low complexity. Over residues 96–110 (SSRQNQGAPSGNLSN) the composition is skewed to polar residues. Residues 125–145 (SVSGNTNHTGSNSSSNSGSNN) are compositionally biased toward low complexity. A compositionally biased stretch (polar residues) spans 188–204 (SASSASKLPTHNVQQQH). Composition is skewed to low complexity over residues 272 to 287 (SYQH…QSHP), 309 to 334 (PLLT…SSQH), and 393 to 406 (SNEE…NSSN). Positions 433–450 (SKPQHPQQAANLNNSCSP) are enriched in polar residues. S453 bears the Phosphoserine mark. Positions 463–472 (PFSTQKQSQT) are enriched in polar residues. The span at 523–536 (TEQHRMQQDDEPPK) shows a compositional bias: basic and acidic residues. 2 stretches are compositionally biased toward low complexity: residues 549–570 (QSNS…SQSS) and 632–641 (TTAAVAAPPA). The residue at position 642 (T642) is a Phosphothreonine. Positions 678–688 (ERISSPEKPAE) are enriched in basic and acidic residues. Phosphoserine is present on residues S682, S749, and S753. Residues 755-764 (IPQSRSTSTP) are compositionally biased toward polar residues. S793 and S799 each carry phosphoserine. Over residues 832–860 (STSAAAAAALAARQLSEAASATKSKPAAG) the composition is skewed to low complexity. Residues 861–874 (AKKKNAGVKGKKGS) are compositionally biased toward basic residues. The segment covering 937–947 (HSAEDVNEKQT) has biased composition (basic and acidic residues). Residues 1071-1089 (DSSISYSDDPNESRSQCSS) show a composition bias toward polar residues. Residues 1089–1131 (SVDLLDCSTESKFVETFRGMGKTSENGFEVWLHEDCAVWSNDI) form a C2HC pre-PHD-type; degenerate zinc finger. A Phosphoserine modification is found at S1099. The PHD-type zinc finger occupies 1151–1199 (YQCVLCQQTGASICCFQRCCKAAAHVPCGRSANWSLSEEDRKVYCHLHR).

This is an uncharacterized protein from Drosophila melanogaster (Fruit fly).